We begin with the raw amino-acid sequence, 228 residues long: MNPLLEKKFGDEFTRVENALTALRSGKGILVSDSPDRENEADLIFSAEFLTETQMAMLIRECSGIVCLCLTTEKVQALALPMMVSENTSGFQTAFTVSIEAKTGVKTGVSAADRVRTVKTAIAADAKPEELARPGHVFPLRARTGGVLERPGHTEATVDLMRLAGLSPYGVLCELTNPDGTMANLDEAIAFAEKHDFPVLTVEDVINYRLEKEREKSASPALFSVFEN.

Residues 37–38, Asp42, 150–154, and Glu174 contribute to the D-ribulose 5-phosphate site; these read RE and RPGHT. Residue Glu38 coordinates Mg(2+). Residue His153 participates in Mg(2+) binding.

Belongs to the DHBP synthase family. Homodimer. Requires Mg(2+) as cofactor. It depends on Mn(2+) as a cofactor.

The catalysed reaction is D-ribulose 5-phosphate = (2S)-2-hydroxy-3-oxobutyl phosphate + formate + H(+). Its pathway is cofactor biosynthesis; riboflavin biosynthesis; 2-hydroxy-3-oxobutyl phosphate from D-ribulose 5-phosphate: step 1/1. In terms of biological role, catalyzes the conversion of D-ribulose 5-phosphate to formate and 3,4-dihydroxy-2-butanone 4-phosphate. The protein is 3,4-dihydroxy-2-butanone 4-phosphate synthase of Chloroherpeton thalassium (strain ATCC 35110 / GB-78).